Reading from the N-terminus, the 469-residue chain is UDP-N-acetylmuramate--L-alanine ligase (469 aa).

ATP is bound at residue 113-119 (GTHGKTT).

It belongs to the MurCDEF family.

It localises to the cytoplasm. It carries out the reaction UDP-N-acetyl-alpha-D-muramate + L-alanine + ATP = UDP-N-acetyl-alpha-D-muramoyl-L-alanine + ADP + phosphate + H(+). It participates in cell wall biogenesis; peptidoglycan biosynthesis. Its function is as follows. Cell wall formation. This chain is UDP-N-acetylmuramate--L-alanine ligase, found in Neisseria meningitidis serogroup A / serotype 4A (strain DSM 15465 / Z2491).